The chain runs to 73 residues: Potassium channel toxin alpha-KTx 27.4 (73 aa).

Residues 1–26 (MKFLFLTLVLLYFTAILVFIVFPSYA) form the signal peptide.

It belongs to the short scorpion toxin superfamily. Potassium channel inhibitor family. Alpha-KTx 27 subfamily. Post-translationally, contains 4 disulfide bonds. In terms of tissue distribution, expressed by the venom gland.

The protein localises to the secreted. This chain is Potassium channel toxin alpha-KTx 27.4, found in Mesobuthus gibbosus (Mediterranean checkered scorpion).